The primary structure comprises 207 residues: Small ribosomal subunit protein uS4 (207 aa).

One can recognise an S4 RNA-binding domain in the interval 96–156 (SRLDNTVYRM…KKSHKQSRIR (61 aa)).

The protein belongs to the universal ribosomal protein uS4 family. Part of the 30S ribosomal subunit. Contacts protein S5. The interaction surface between S4 and S5 is involved in control of translational fidelity.

In terms of biological role, one of the primary rRNA binding proteins, it binds directly to 16S rRNA where it nucleates assembly of the body of the 30S subunit. Functionally, with S5 and S12 plays an important role in translational accuracy. The chain is Small ribosomal subunit protein uS4 from Blochmanniella pennsylvanica (strain BPEN).